We begin with the raw amino-acid sequence, 549 residues long: MQAEKTPRNIKAARGTTLRCKGWQQETILRLLENNIENGERPEDLVIYMNAAKAARDWDCFDAIVRTLKTMEADETLVVQSGKPVGLFRTHAFAPRVLLANGNVAGRWAGDANMFELEKRGLTILPGMTAACWQYIGSQGIVQGTYQSFVSAAEQYFGGSLAGRIILTAGAGGMGGAQPLAGKMAGAATLVVDVDPVSLERRLNTGYLDVIATSVDDALARIRTLAAEREGGSVGIVGNAADVFEALHRKELRPDIVTDQCMVDPYRGYVPSGLSPAEAAQLVRTDPEQALALAAATLARHARAMLRFRDDGAVVFEYGNTLRARSVAAGVPEAGELPSFVTLFIRPLFCRGIGPFRWIAASGDPKDIAAIDGIIESTFAEGHMIRQWIPMARKYIQFQGLPARIGWLGHGERSKLALLVNEAVADGRISAPIAFTRDHLDAGSVASPYRETEKMQDGSDAVSDWPLLNAMLACSNGASLVALHSNGDKSASAGQTAIADGTPMAAFKLKSVLDADTGIGVIRYADAGYEVARETRALHGLGIEIGGGE.

NAD(+)-binding residues include M49, G173, M174, G175, D193, S198, N239, A240, Q260, V270, and Y318.

It belongs to the urocanase family. S-methyl thiourocanate hydratase subfamily. NAD(+) is required as a cofactor.

The enzyme catalyses S-methyl-(E)-thiourocanate + H2O = S-methyl-thiohydantoin-5-propanoate. Hydratase involved in the catabolism of S-methyl ergothioneine. Catalyzes the 1,4-addition of H(2)O to S-methyl thiourocanate, leading to the formation of S-methyl-thiohydantoin-5-propanoate, the second step in S-methyl ergothioneine degradation. Cannot use urocanate or thiourocanate as substrate. The protein is S-methyl thiourocanate hydratase of Variovorax sp. (strain JCM 16519 / RA8).